Here is a 394-residue protein sequence, read N- to C-terminus: Cystathionine gamma-lyase (394 aa).

Residues 37 to 56 are disordered; that stretch reads KQSSPANPIGTYEYSRSQNP. Substrate-binding residues include Arg52, Tyr104, and Arg109. N6-(pyridoxal phosphate)lysine is present on Lys204. Substrate is bound at residue Glu334. Ser362 is subject to Phosphoserine.

This sequence belongs to the trans-sulfuration enzymes family. In terms of assembly, homotetramer. It depends on pyridoxal 5'-phosphate as a cofactor.

The protein resides in the cytoplasm. It catalyses the reaction L,L-cystathionine + H2O = 2-oxobutanoate + L-cysteine + NH4(+). It participates in amino-acid biosynthesis; L-cysteine biosynthesis; L-cysteine from L-homocysteine and L-serine: step 2/2. Its function is as follows. Catalyzes the production of cysteine from cystathionine in the reverse transsulfuration pathway for the biosynthesis of sulfur-containing amino acids cysteine and methionine. In this pathway, homocysteine sulfur is converted to cysteine sulfur. Also has cystathionine beta-lyase and cystathionine gamma-synthase activities in vitro. Cystathionine beta-lyase may be physiological, while cystathionine gamma-synthase activity is not, as the required substrate O-succinyl-L-homoserine(OSH) does not occur naturally in S.cerevisiae. The polypeptide is Cystathionine gamma-lyase (Saccharomyces cerevisiae (strain ATCC 204508 / S288c) (Baker's yeast)).